Consider the following 195-residue polypeptide: Nucleoside-triphosphatase THEP1 (195 aa).

ATP-binding positions include 11-18 and 103-110; these read GRPGSGKS and VVVIDEIG.

The protein belongs to the THEP1 NTPase family.

The catalysed reaction is a ribonucleoside 5'-triphosphate + H2O = a ribonucleoside 5'-diphosphate + phosphate + H(+). In terms of biological role, has nucleotide phosphatase activity towards ATP, GTP, CTP, TTP and UTP. May hydrolyze nucleoside diphosphates with lower efficiency. The sequence is that of Nucleoside-triphosphatase THEP1 from Korarchaeum cryptofilum (strain OPF8).